The following is a 456-amino-acid chain: tRNA modification GTPase MnmE (456 aa).

(6S)-5-formyl-5,6,7,8-tetrahydrofolate-binding residues include Arg-24, Glu-81, and Lys-120. A TrmE-type G domain is found at 216–379 (GMTVVIAGRP…LRDHLKACMG (164 aa)). A K(+)-binding site is contributed by Asn-226. Residues 226–231 (NAGKSS), 245–251 (TDIAGTT), 270–273 (DTAG), 335–338 (NKAD), and 359–361 (SAR) contribute to the GTP site. Ser-230 contacts Mg(2+). Residues Thr-245, Ile-247, and Thr-250 each contribute to the K(+) site. Thr-251 is a Mg(2+) binding site. Lys-456 provides a ligand contact to (6S)-5-formyl-5,6,7,8-tetrahydrofolate.

It belongs to the TRAFAC class TrmE-Era-EngA-EngB-Septin-like GTPase superfamily. TrmE GTPase family. As to quaternary structure, homodimer. Heterotetramer of two MnmE and two MnmG subunits. The cofactor is K(+).

It is found in the cytoplasm. Functionally, exhibits a very high intrinsic GTPase hydrolysis rate. Involved in the addition of a carboxymethylaminomethyl (cmnm) group at the wobble position (U34) of certain tRNAs, forming tRNA-cmnm(5)s(2)U34. This Pseudomonas entomophila (strain L48) protein is tRNA modification GTPase MnmE.